We begin with the raw amino-acid sequence, 407 residues long: Odorant receptor 67a (407 aa).

Residues 1 to 40 are Cytoplasmic-facing; sequence MDNVAEMPEEKYVEVDDFLRLAVKFYNTLGIDPYETGRKR. Residues 41-61 traverse the membrane as a helical segment; sequence TIWFQIYFALNMFNMVFSFYA. Topologically, residues 62-79 are extracellular; that stretch reads EVATLVDRLRDNENFLES. A helical membrane pass occupies residues 80–100; the sequence is CILLSYVSFVVMGLSKIGAVM. The Cytoplasmic portion of the chain corresponds to 101 to 144; it reads KKKPKMTALVRQLETCFPSPSAKVQEEYAVKSWLKRCHIYTKGF. Residues 145 to 165 traverse the membrane as a helical segment; that stretch reads GGLFMIMYFAHALIPLFIYFI. Residues 166–208 lie on the Extracellular side of the membrane; the sequence is QRVLLHYPDAKQIMPFYQLEPWEFRDSWLFYPSYFHQSSAGYT. The helical transmembrane segment at 209–229 threads the bilayer; sequence ATCGSIAGDLMIFAVVLQVIM. The Cytoplasmic segment spans residues 230–278; that stretch reads HYERLAKVLREFKIQAHNAPNGAKEDIRKLQSLVANHIDILRLTDLMNE. A helical membrane pass occupies residues 279-300; that stretch reads VFGIPLLLNFIASALLVCLVGV. Residues 301 to 314 are Extracellular-facing; it reads QLTIALSPEYFCKQ. The helical transmembrane segment at 315-331 threads the bilayer; the sequence is MLFLISVLLEVYLLCSF. Residues 332–378 lie on the Cytoplasmic side of the membrane; it reads SQRLIDASENVGHAAYDMDWLGSDKRFKKILIFISMRSQKPVCLKAT. A helical membrane pass occupies residues 379–401; that stretch reads VVLDLSMPTMSIFLGMSYKFFCA. The Extracellular segment spans residues 402–407; that stretch reads VRTMYQ.

Belongs to the insect chemoreceptor superfamily. Heteromeric odorant receptor channel (TC 1.A.69) family. Or49a subfamily. As to quaternary structure, interacts with Orco. Complexes exist early in the endomembrane system in olfactory sensory neurons (OSNs), coupling these complexes to the conserved ciliary trafficking pathway. In terms of tissue distribution, expressed in olfactory sensory neurons in the antenna.

Its subcellular location is the cell membrane. In terms of biological role, odorant receptor which mediates acceptance or avoidance behavior, depending on its substrates. The odorant receptor repertoire encodes a large collection of odor stimuli that vary widely in identity, intensity, and duration. Forms a complex with Orco to form odorant-sensing units, providing sensitive and prolonged odorant signaling and calcium permeability. Involved in the behavioral responses to benzaldehyde and acetophenone. The protein is Odorant receptor 67a (Or67a) of Drosophila melanogaster (Fruit fly).